Here is a 112-residue protein sequence, read N- to C-terminus: Large ribosomal subunit protein uL22 (112 aa).

The protein belongs to the universal ribosomal protein uL22 family. Part of the 50S ribosomal subunit.

This protein binds specifically to 23S rRNA; its binding is stimulated by other ribosomal proteins, e.g. L4, L17, and L20. It is important during the early stages of 50S assembly. It makes multiple contacts with different domains of the 23S rRNA in the assembled 50S subunit and ribosome. In terms of biological role, the globular domain of the protein is located near the polypeptide exit tunnel on the outside of the subunit, while an extended beta-hairpin is found that lines the wall of the exit tunnel in the center of the 70S ribosome. In Anaplasma phagocytophilum (strain HZ), this protein is Large ribosomal subunit protein uL22.